Here is a 139-residue protein sequence, read N- to C-terminus: Non-structural protein 1 (139 aa).

The short motif at 136–139 (DLNP) is the DLNP; interaction with MAP1B element.

Belongs to the pneumovirus non-structural protein 1 family. As to quaternary structure, monomer. Homomultimer. Heteromultimer with NS2. Interacts with the matrix protein M. Interacts with host ELOC and CUL2; this interaction allows NS1 to form an active E3 ligase with ELOC and CUL2. Interacts with host IRF3; this interaction leads to the disrupted association of IRF3 with CREBBP and thus reduced binding of IRF3 to the IFN-beta promoter. Interacts with host MAVS; this interaction prevents MAVS binding to RIGI and inhibits signaling pathway leading to interferon production. Interacts with host MAP1B/microtubule-associated protein 1B. Interacts with host TRIM25 (via SPRY domain); this interaction suppresses RIGI ubiquitination and results in decreased interaction between RIGI and MAVS.

Its subcellular location is the host cytoplasm. It localises to the host mitochondrion. The protein resides in the host nucleus. In terms of biological role, plays a major role in antagonizing the type I IFN-mediated antiviral response by degrading or inhibiting multiple cellular factors required for either IFN induction or response pathways. Acts cooperatively with NS2 to repress activation and nuclear translocation of host IFN-regulatory factor IRF3. Also disrupts the association of IRF3 with CREBBP. Interacts with host mitochondrial-associated membrane (MAM) MAVS and prevents the interaction with RIGI. Interacts with TRIM25 to suppress TRIM25-mediated RIGI ubiquitination and thereby RIGI-MAVS interaction. Together with NS2, participates in the proteasomal degradation of host STAT2, IRF3, IRF7, TBK1 and RIGI through a NS-degradasome involving CUL2 and Elongin-C. The degradasome requires an intact mitochondrial MAVS. Decreases the levels of host TRAF3 and IKBKE/IKK-epsilon. As functions other than disruptions of the type I IFN-mediated antiviral signaling pathways, induces host SOCS1 and SOCS3 expression. Suppresses premature apoptosis by an NF-kappa-B-dependent, interferon-independent mechanism and thus facilitates virus growth. Additionally, NS1 may serve some inhibitory role in viral transcription and RNA replication. Suppresses proliferation and activation of host CD103+ CD8+ cytotoxic T-lymphocytes and Th17 helper T-lymphocytes. The chain is Non-structural protein 1 (1C) from Homo sapiens (Human).